Consider the following 557-residue polypeptide: ABC1 family protein MCP2 homolog (557 aa).

A mitochondrion-targeting transit peptide spans 1-33 (MFSRFSWPRITRCFRSYPKKKSSCISFTHHARE). The Mitochondrial matrix portion of the chain corresponds to 34 to 39 (HTNFKK). The helical transmembrane segment at 40–56 (PAVVGASITLMASVALV) threads the bilayer. The Mitochondrial intermembrane segment spans residues 57-557 (DFDPVKHAGV…NYFYYKHMYL (501 aa)).

Belongs to the protein kinase superfamily. ADCK protein kinase family.

It is found in the mitochondrion inner membrane. Involved in mitochondrial lipid homeostasis. The protein is ABC1 family protein MCP2 homolog of Schizosaccharomyces pombe (strain 972 / ATCC 24843) (Fission yeast).